A 280-amino-acid chain; its full sequence is uncharacterized protein (280 aa).

The transit peptide at 1 to 51 (MATSLLLRHSSAVFFSQSSFFTKNKSFRSFTSIKMEKGEAENAVKTKKVFV) directs the protein to the chloroplast.

The protein belongs to the NAD(P)-dependent epimerase/dehydratase family.

Its subcellular location is the plastid. It is found in the chloroplast. The protein resides in the plastoglobule. This is an uncharacterized protein from Arabidopsis thaliana (Mouse-ear cress).